The following is a 1172-amino-acid chain: DNA-directed RNA polymerase subunit beta (1172 aa).

This sequence belongs to the RNA polymerase beta chain family. The RNAP catalytic core consists of 2 alpha, 1 beta, 1 beta' and 1 omega subunit. When a sigma factor is associated with the core the holoenzyme is formed, which can initiate transcription.

The catalysed reaction is RNA(n) + a ribonucleoside 5'-triphosphate = RNA(n+1) + diphosphate. Its function is as follows. DNA-dependent RNA polymerase catalyzes the transcription of DNA into RNA using the four ribonucleoside triphosphates as substrates. In Mycobacterium sp. (strain KMS), this protein is DNA-directed RNA polymerase subunit beta.